Consider the following 1487-residue polypeptide: Major viral transcription factor ICP4 homolog (1487 aa).

Disordered stretches follow at residues 41 to 295 (AAPD…LPPG), 310 to 370 (LAKT…AEEA), and 803 to 1007 (PPTR…HTPR). Pro residues predominate over residues 66–75 (VIPPPSPAPE). 2 stretches are compositionally biased toward low complexity: residues 165–193 (PSSA…SSSS) and 201–213 (DGAG…SSSS). The segment covering 214-224 (DDSDSDEGGEE) has biased composition (acidic residues). The span at 235–272 (AAKTPSAAGSPGPSSGGDRPAAGAATPKSCRSGAASPG) shows a compositional bias: low complexity. Pro residues predominate over residues 273 to 285 (APAPAPASAPAPS). 3 stretches are compositionally biased toward low complexity: residues 807–829 (SQQP…AEGS), 849–860 (PSSHSQSPQHSQ), and 867–877 (ATTATCCRATQ). Residues 878 to 893 (TNARSRGQQHQPQKAR) show a composition bias toward polar residues. A compositionally biased stretch (basic residues) spans 920–929 (HGRPRGKSGK). Low complexity predominate over residues 938-951 (AAQAGASASFSSSA). A compositionally biased stretch (basic and acidic residues) spans 988 to 1007 (GPDRRGGFRRVPRGDCHTPR).

This sequence belongs to the herpesviridae ICP4 family. In terms of processing, a long stretch of serine residues may be a major site of phosphorylation.

Its subcellular location is the host nucleus. This IE protein is a multifunctional protein capable of migrating to the nucleus, binding to DNA, trans-activating other viral genes, and autoregulating its own synthesis. The chain is Major viral transcription factor ICP4 homolog (IE) from Equus caballus (Horse).